The primary structure comprises 183 residues: MKKKSSLSEEDQALFRQLMAGTRQIKQDTIVHRPPRKKISEVPVKRLIQEQADASHYFSDEFQPLLNTEGPVKYVRPDVSHFEAKKLRRGDYSPELFLDLHGLTQLQAKQELGALIATCRREHVFCACVMHGHGKHILKQQTPLWLAQHPHVMAFHQAPKEYGGDAALLVLIEVEEWLPPELP.

One can recognise a Smr domain in the interval 98 to 173; the sequence is LDLHGLTQLQ…GDAALLVLIE (76 aa).

It belongs to the SmrB family. As to quaternary structure, associates with collided ribosomes, but not with correctly translating polysomes.

In terms of biological role, acts as a ribosome collision sensor. Detects stalled/collided disomes (pairs of ribosomes where the leading ribosome is stalled and a second ribosome has collided with it) and endonucleolytically cleaves mRNA at the 5' boundary of the stalled ribosome. Stalled/collided disomes form a new interface (primarily via the 30S subunits) that binds SmrB. Cleaved mRNA becomes available for tmRNA ligation, leading to ribosomal subunit dissociation and rescue of stalled ribosomes. The chain is Ribosome rescue factor SmrB from Escherichia fergusonii (strain ATCC 35469 / DSM 13698 / CCUG 18766 / IAM 14443 / JCM 21226 / LMG 7866 / NBRC 102419 / NCTC 12128 / CDC 0568-73).